Reading from the N-terminus, the 365-residue chain is 4-hydroxy-3-methylbut-2-en-1-yl diphosphate synthase (flavodoxin) (365 aa).

[4Fe-4S] cluster is bound by residues cysteine 270, cysteine 273, cysteine 305, and glutamate 312.

This sequence belongs to the IspG family. It depends on [4Fe-4S] cluster as a cofactor.

The catalysed reaction is (2E)-4-hydroxy-3-methylbut-2-enyl diphosphate + 2 oxidized [2Fe-2S]-[ferredoxin] + H2O = 2-C-methyl-D-erythritol 2,4-cyclic diphosphate + 2 reduced [2Fe-2S]-[ferredoxin] + H(+). The enzyme catalyses (2E)-4-hydroxy-3-methylbut-2-enyl diphosphate + oxidized [flavodoxin] + H2O + 2 H(+) = 2-C-methyl-D-erythritol 2,4-cyclic diphosphate + reduced [flavodoxin]. It participates in isoprenoid biosynthesis; isopentenyl diphosphate biosynthesis via DXP pathway; isopentenyl diphosphate from 1-deoxy-D-xylulose 5-phosphate: step 5/6. Functionally, converts 2C-methyl-D-erythritol 2,4-cyclodiphosphate (ME-2,4cPP) into 1-hydroxy-2-methyl-2-(E)-butenyl 4-diphosphate. Involved in density-dependent regulation of 2'-N-acetyltransferase. The polypeptide is 4-hydroxy-3-methylbut-2-en-1-yl diphosphate synthase (flavodoxin) (Providencia stuartii).